The following is a 93-amino-acid chain: WAP four-disulfide core domain protein 13 (93 aa).

A signal peptide spans 1-22 (MKPVLPLQFLVVFCLALQLVPG). The 50-residue stretch at 24–73 (PKQRVLKYILEPPPCISAPENCTHLCTMQEDCEKGFQCCSSFCGIVCSSE) folds into the WAP; atypical domain. 3 disulfide bridges follow: cysteine 45/cysteine 66, cysteine 49/cysteine 61, and cysteine 55/cysteine 70.

The protein localises to the secreted. Its function is as follows. Putative acid-stable proteinase inhibitor. This chain is WAP four-disulfide core domain protein 13 (WFDC13), found in Homo sapiens (Human).